Here is a 218-residue protein sequence, read N- to C-terminus: Thiopurine S-methyltransferase (218 aa).

The S-adenosyl-L-methionine site is built by W10, L45, E66, and R123.

This sequence belongs to the class I-like SAM-binding methyltransferase superfamily. TPMT family.

It is found in the cytoplasm. The enzyme catalyses S-adenosyl-L-methionine + a thiopurine = S-adenosyl-L-homocysteine + a thiopurine S-methylether.. The chain is Thiopurine S-methyltransferase from Pseudomonas aeruginosa (strain LESB58).